We begin with the raw amino-acid sequence, 82 residues long: Sec-independent protein translocase protein TatA (82 aa).

Residues 1–21 form a helical membrane-spanning segment; the sequence is MGSFSIWHWLIVLLIVVMVFG. Residues 46–82 form a disordered region; sequence GASTDDSATTSAPAGQVTNNSAAADKTTIDVEAKHKS. Polar residues predominate over residues 49–67; sequence TDDSATTSAPAGQVTNNSA. The segment covering 72 to 82 has biased composition (basic and acidic residues); it reads TTIDVEAKHKS.

It belongs to the TatA/E family. In terms of assembly, the Tat system comprises two distinct complexes: a TatABC complex, containing multiple copies of TatA, TatB and TatC subunits, and a separate TatA complex, containing only TatA subunits. Substrates initially bind to the TatABC complex, which probably triggers association of the separate TatA complex to form the active translocon.

It localises to the cell inner membrane. Part of the twin-arginine translocation (Tat) system that transports large folded proteins containing a characteristic twin-arginine motif in their signal peptide across membranes. TatA could form the protein-conducting channel of the Tat system. The protein is Sec-independent protein translocase protein TatA of Acidovorax ebreus (strain TPSY) (Diaphorobacter sp. (strain TPSY)).